Here is a 240-residue protein sequence, read N- to C-terminus: Probable transcriptional regulatory protein jhp_0149 (240 aa).

It belongs to the TACO1 family.

Its subcellular location is the cytoplasm. In Helicobacter pylori (strain J99 / ATCC 700824) (Campylobacter pylori J99), this protein is Probable transcriptional regulatory protein jhp_0149.